The sequence spans 1155 residues: Cilia- and flagella-associated protein 251 (1155 aa).

2 stretches are compositionally biased toward basic and acidic residues: residues methionine 1–glutamate 19 and lysine 31–glutamate 59. 2 disordered regions span residues methionine 1–leucine 144 and leucine 167–serine 225. Over residues glutamate 60–glutamate 69 the composition is skewed to acidic residues. Residues glutamate 70–alanine 95 show a composition bias toward basic and acidic residues. Low complexity predominate over residues glutamine 99–glutamate 111. Polar residues-rich tracts occupy residues threonine 118–serine 128 and proline 172–arginine 182. Over residues glycine 201–valine 220 the composition is skewed to basic and acidic residues. WD repeat units follow at residues proline 341–tryptophan 383, alanine 391–glutamate 431, leucine 442–isoleucine 481, proline 499–histidine 534, serine 537–leucine 597, glycine 601–tyrosine 641, leucine 647–alanine 684, proline 694–valine 730, tryptophan 737–leucine 780, leucine 791–alanine 831, arginine 837–valine 883, lysine 889–isoleucine 927, tyrosine 965–serine 1005, and glycine 1025–asparagine 1065.

It localises to the cytoplasm. Its subcellular location is the cytoskeleton. The protein resides in the cilium axoneme. The protein localises to the cell projection. It is found in the cilium. It localises to the flagellum. Functionally, involved in spermatozoa motility. May also regulate cilium motility through its role in the assembly of the axonemal radial spokes. The sequence is that of Cilia- and flagella-associated protein 251 from Pongo abelii (Sumatran orangutan).